The primary structure comprises 149 residues: Small ribosomal subunit protein uS15 (149 aa).

The segment covering 1–14 (MGRMHTHRHGKSHS) has biased composition (basic residues). The disordered stretch occupies residues 1–20 (MGRMHTHRHGKSHSIRPATL).

The protein belongs to the universal ribosomal protein uS15 family. Part of the 30S ribosomal subunit.

This chain is Small ribosomal subunit protein uS15, found in Nitrosopumilus maritimus (strain SCM1).